Consider the following 649-residue polypeptide: Glycerol-3-phosphate dehydrogenase, mitochondrial (649 aa).

69-97 serves as a coordination point for FAD; sequence DVLIIGGGATGTGVAVDASTRGLNVCLLE.

This sequence belongs to the FAD-dependent glycerol-3-phosphate dehydrogenase family. The cofactor is FAD.

It localises to the mitochondrion. It carries out the reaction a quinone + sn-glycerol 3-phosphate = dihydroxyacetone phosphate + a quinol. The protein operates within polyol metabolism; glycerol degradation via glycerol kinase pathway; glycerone phosphate from sn-glycerol 3-phosphate (anaerobic route): step 1/1. The protein is Glycerol-3-phosphate dehydrogenase, mitochondrial (gut2) of Schizosaccharomyces pombe (strain 972 / ATCC 24843) (Fission yeast).